The chain runs to 127 residues: Large ribosomal subunit protein bL17 (127 aa).

Belongs to the bacterial ribosomal protein bL17 family. In terms of assembly, part of the 50S ribosomal subunit. Contacts protein L32.

This chain is Large ribosomal subunit protein bL17, found in Xanthomonas oryzae pv. oryzae (strain KACC10331 / KXO85).